A 201-amino-acid chain; its full sequence is Holliday junction resolvase RecU (201 aa).

Residues Thr-87, Asp-89, Glu-102, and Gln-121 each contribute to the Mg(2+) site.

This sequence belongs to the RecU family. Mg(2+) is required as a cofactor.

The protein localises to the cytoplasm. It catalyses the reaction Endonucleolytic cleavage at a junction such as a reciprocal single-stranded crossover between two homologous DNA duplexes (Holliday junction).. Its function is as follows. Endonuclease that resolves Holliday junction intermediates in genetic recombination. Cleaves mobile four-strand junctions by introducing symmetrical nicks in paired strands. Promotes annealing of linear ssDNA with homologous dsDNA. Required for DNA repair, homologous recombination and chromosome segregation. The sequence is that of Holliday junction resolvase RecU from Listeria monocytogenes serotype 4b (strain F2365).